The following is a 291-amino-acid chain: ATP phosphoribosyltransferase 1 (291 aa).

This sequence belongs to the ATP phosphoribosyltransferase family. Long subfamily. The cofactor is Mg(2+).

Its subcellular location is the cytoplasm. The catalysed reaction is 1-(5-phospho-beta-D-ribosyl)-ATP + diphosphate = 5-phospho-alpha-D-ribose 1-diphosphate + ATP. Its pathway is amino-acid biosynthesis; L-histidine biosynthesis; L-histidine from 5-phospho-alpha-D-ribose 1-diphosphate: step 1/9. Its activity is regulated as follows. Feedback inhibited by histidine. Catalyzes the condensation of ATP and 5-phosphoribose 1-diphosphate to form N'-(5'-phosphoribosyl)-ATP (PR-ATP). Has a crucial role in the pathway because the rate of histidine biosynthesis seems to be controlled primarily by regulation of HisG enzymatic activity. The protein is ATP phosphoribosyltransferase 1 of Geobacter sulfurreducens (strain ATCC 51573 / DSM 12127 / PCA).